We begin with the raw amino-acid sequence, 249 residues long: 2,3-bisphosphoglycerate-dependent phosphoglycerate mutase (249 aa).

Residues 8 to 15 (RHGESAWN), 21 to 22 (TG), Arg-60, 87 to 90 (ERHY), Lys-98, 114 to 115 (RR), and 183 to 184 (GN) contribute to the substrate site. His-9 serves as the catalytic Tele-phosphohistidine intermediate. Residue Glu-87 is the Proton donor/acceptor of the active site.

The protein belongs to the phosphoglycerate mutase family. BPG-dependent PGAM subfamily.

The catalysed reaction is (2R)-2-phosphoglycerate = (2R)-3-phosphoglycerate. It functions in the pathway carbohydrate degradation; glycolysis; pyruvate from D-glyceraldehyde 3-phosphate: step 3/5. Its function is as follows. Catalyzes the interconversion of 2-phosphoglycerate and 3-phosphoglycerate. This Methanosphaerula palustris (strain ATCC BAA-1556 / DSM 19958 / E1-9c) protein is 2,3-bisphosphoglycerate-dependent phosphoglycerate mutase.